The sequence spans 529 residues: Type I restriction enzyme StySPI methylase subunit (529 aa).

Residues 148-153, 178-180, and Glu-216 each bind S-adenosyl-L-methionine; these read QYFTPR and TAG. A disordered region spans residues 424-443; it reads AEESEVADSEENKNADQHQA.

The protein belongs to the N(4)/N(6)-methyltransferase family. The type I restriction/modification system is composed of three polypeptides R, M and S; the restriction enzyme has stoichiometry R(2)M(2)S(1) while the methyltransferase is M(2)S(1).

The enzyme catalyses a 2'-deoxyadenosine in DNA + S-adenosyl-L-methionine = an N(6)-methyl-2'-deoxyadenosine in DNA + S-adenosyl-L-homocysteine + H(+). The subtype gamma methyltransferase (M) subunit of a type I restriction enzyme. The M and S subunits together form a methyltransferase (MTase) that methylates A-2 on the top strand and A-3 on the bottom strand of the sequence 5'-AACN(6)GTRC-3'. In the presence of the R subunit the complex can also act as an endonuclease, binding to the same target sequence but cutting the DNA some distance from this site. Whether the DNA is cut or modified depends on the methylation state of the target sequence. When the target site is unmodified, the DNA is cut. When the target site is hemimethylated, the complex acts as a maintenance MTase modifying the DNA so that both strands become methylated. After locating a non-methylated recognition site, the enzyme complex serves as a molecular motor that translocates DNA in an ATP-dependent manner until a collision occurs that triggers cleavage. The polypeptide is Type I restriction enzyme StySPI methylase subunit (Salmonella potsdam).